Consider the following 339-residue polypeptide: Heat-inducible transcription repressor HrcA (339 aa).

This sequence belongs to the HrcA family.

Functionally, negative regulator of class I heat shock genes (grpE-dnaK-dnaJ and groELS operons). Prevents heat-shock induction of these operons. This is Heat-inducible transcription repressor HrcA from Leifsonia xyli subsp. xyli (strain CTCB07).